Here is a 1065-residue protein sequence, read N- to C-terminus: MAVHAPYNHAPPPTQEINGQKPTLAPAITLERPADCINRGQYPAFYIICGYLNRLRADAPHKKYELLTRIFGNWREKVGPDLYPLIRLLLPDKDRERPVYNLKESMLARCYIDILSLEKHSEAAQRLIKWKQPAGNSPNPTGDFAKVCYNEIKARSTVEEGQLSVEAVNMLLDKLAVGKMKQKDYVPILKAINMQCTAEEQEWIIRIILKDLHISIRERGVLSAFHPDAIDLYNVCSDLKRVCWTLYDPGFRLNKNETHLELFHSFLPQLCGRMNDASLENIAKAIGAPKEFIMEEKLDGERIQLHMRGNGAQWFYCSRKAKDYTYLYGAHPGEGSLTRYIATAFQDNVRNVILDGEMMVWDPVVERYLAFGTLKSAALAFSLVKVFDILFLNDHCLSRKRLSERKRLLRSGKIFKNIENYKGRLEFVDEKRGKNAKDIREYLERVVETKGEGLVVKKTDVIYQTNSRGYDWIKVKPEYSDQMGENLEVLVLGGWWGKGGRSGKISRLLCGLREQAFDDGTLQDFLFNRFWNELLGLRVDFVSHLMHLRSMRCSPTHLSQCRNKHKKHWRPFDRSNPPPFMKLGPVGLDDKPDVYIEPENSFVIEVKASEIVPAGYGIGFTLRFPRCKYIYYDKNSRDYALDDECLWTVGQGFFYKTRKLIKRTDFMDLFSRPKRSYDDSQGPGNFRGQKLSDADVETSIFSDMTFSDLEALVHKHGADFTQAQLSDLSAIVISPDQKNPLVRAQIRHGVNVIKPEWVFESIARRTALPFLKEFLVFASEEAQDGRYYNKTLEQYDKVSFVRDRTGGALVDEDGDADVEDEIMDGEDKDEIDVEESRESKNRRMAREDLKEKESNRTLEQKKLQEAWGLRSRASPGDSDSEPEEEMSLKEESDTDSERSRGLRAIYEDEEDGENDSHESDVGVNGDDYRAVPLSGLNDKEEGLMGESPEAMHYDEDRIFYHLAFYIDTAKNAAVNGLESSSPSFDTQERLVKVEKLLIENGGRVARSISDPKLTHIIMDDEDSRRYVELTRKTAMPKRKHIVTPKWVEDCVDEETLLDEDLYKPK.

Residues 1–20 form a disordered region; that stretch reads MAVHAPYNHAPPPTQEINGQ. ATP-binding residues include Glu-295, Lys-297, Leu-298, Arg-302, Glu-357, Phe-387, Glu-452, Lys-457, Lys-474, and Lys-476. The N6-AMP-lysine intermediate role is filled by Lys-297. Residue Glu-357 participates in Mg(2+) binding. Glu-452 serves as a coordination point for Mg(2+). One can recognise a BRCT 1 domain in the interval 696 to 775; that stretch reads VETSIFSDMT…TALPFLKEFL (80 aa). The disordered stretch occupies residues 825–928; sequence GEDKDEIDVE…SDVGVNGDDY (104 aa). 2 stretches are compositionally biased toward basic and acidic residues: residues 834-864 and 886-900; these read EESRESKNRRMAREDLKEKESNRTLEQKKLQ and MSLKEESDTDSERSR. Residues 954–1064 form the BRCT 2 domain; that stretch reads DEDRIFYHLA…TLLDEDLYKP (111 aa).

This sequence belongs to the ATP-dependent DNA ligase family. Mg(2+) is required as a cofactor.

It localises to the nucleus. It catalyses the reaction ATP + (deoxyribonucleotide)n-3'-hydroxyl + 5'-phospho-(deoxyribonucleotide)m = (deoxyribonucleotide)n+m + AMP + diphosphate.. Functionally, DNA ligase involved in DNA non-homologous end joining (NHEJ); required for double-strand break (DSB) repair. This is DNA ligase 4 (LIG4) from Cryptococcus neoformans var. neoformans serotype D (strain B-3501A) (Filobasidiella neoformans).